A 176-amino-acid chain; its full sequence is Lipoprotein signal peptidase (176 aa).

Helical transmembrane passes span 10 to 30 (LFQF…AIVL), 48 to 68 (VPVL…AFSF), 78 to 98 (YFFT…LLRM), and 102 to 122 (MVVL…NLID). Residues Asp-131 and Asp-149 contribute to the active site. The helical transmembrane segment at 141–161 (HFPAFNIADSAITLGTILLLI) threads the bilayer.

This sequence belongs to the peptidase A8 family.

The protein localises to the cell inner membrane. The enzyme catalyses Release of signal peptides from bacterial membrane prolipoproteins. Hydrolyzes -Xaa-Yaa-Zaa-|-(S,diacylglyceryl)Cys-, in which Xaa is hydrophobic (preferably Leu), and Yaa (Ala or Ser) and Zaa (Gly or Ala) have small, neutral side chains.. It participates in protein modification; lipoprotein biosynthesis (signal peptide cleavage). This protein specifically catalyzes the removal of signal peptides from prolipoproteins. This is Lipoprotein signal peptidase from Acinetobacter baumannii (strain ATCC 17978 / DSM 105126 / CIP 53.77 / LMG 1025 / NCDC KC755 / 5377).